The primary structure comprises 370 residues: uncharacterized protein (370 aa).

This sequence belongs to the metallo-dependent hydrolases superfamily.

This is an uncharacterized protein from Mycobacterium bovis (strain ATCC BAA-935 / AF2122/97).